We begin with the raw amino-acid sequence, 318 residues long: Na(+)-translocating ferredoxin:NAD(+) oxidoreductase complex subunit D (318 aa).

3 consecutive transmembrane segments (helical) span residues 35–55, 77–99, and 114–134; these read LAVAGYVFGLWALALVAICVI, WSAVVTGVLLAFNLPINAPWWIG, and FGGLGQNFINPALAARAFLLA. Position 156 is an FMN phosphoryl threonine (threonine 156). Helical transmembrane passes span 182-202, 206-226, and 261-281; these read VYGCIGEISALALLIGGLYLI, IISWRIPTIYLLTIAIFALLV, and IIYAIGCGLITMIIRLYGGYP.

This sequence belongs to the NqrB/RnfD family. The complex is composed of six subunits: RnfA, RnfB, RnfC, RnfD, RnfE and RnfG. Requires FMN as cofactor.

Its subcellular location is the cell membrane. It catalyses the reaction 2 reduced [2Fe-2S]-[ferredoxin] + Na(+)(in) + NAD(+) + H(+) = 2 oxidized [2Fe-2S]-[ferredoxin] + Na(+)(out) + NADH. Its function is as follows. Part of a membrane-bound complex that couples electron transfer with translocation of ions across the membrane. Couples electron transfer from reduced ferredoxin to NAD(+) with electrogenic movement of Na(+) out of the cell. Involved in caffeate respiration. This Acetobacterium woodii (strain ATCC 29683 / DSM 1030 / JCM 2381 / KCTC 1655 / WB1) protein is Na(+)-translocating ferredoxin:NAD(+) oxidoreductase complex subunit D.